We begin with the raw amino-acid sequence, 83 residues long: Transmembrane protein EP84R (83 aa).

The next 2 helical transmembrane spans lie at 31 to 51 (IIGVILLVISLLFIFIGIIIL) and 59 to 79 (TGSIFVVLSLILGGGGFFLIY).

The protein belongs to the asfivirus EP84R family.

The protein localises to the virion membrane. The protein is Transmembrane protein EP84R of Ornithodoros (relapsing fever ticks).